The chain runs to 165 residues: Adenine phosphoribosyltransferase (165 aa).

Belongs to the purine/pyrimidine phosphoribosyltransferase family. As to quaternary structure, homodimer.

It is found in the cytoplasm. The catalysed reaction is AMP + diphosphate = 5-phospho-alpha-D-ribose 1-diphosphate + adenine. It functions in the pathway purine metabolism; AMP biosynthesis via salvage pathway; AMP from adenine: step 1/1. Its function is as follows. Catalyzes a salvage reaction resulting in the formation of AMP, that is energically less costly than de novo synthesis. The protein is Adenine phosphoribosyltransferase of Bdellovibrio bacteriovorus (strain ATCC 15356 / DSM 50701 / NCIMB 9529 / HD100).